Here is a 1052-residue protein sequence, read N- to C-terminus: Ubiquitin-like modifier-activating enzyme 6 (1052 aa).

Residue methionine 1 is modified to N-acetylmethionine. The disordered stretch occupies residues 1 to 21 (MEGSEPVAAHQGEEASCSSWG). Arginine 46 contributes to the ATP binding site. Residue threonine 54 is modified to Phosphothreonine. Serine 301 is subject to Phosphoserine. ATP-binding residues include alanine 470 and aspartate 497. Residues aspartate 499 and glutamate 502 each contribute to the Mg(2+) site. Residues asparagine 505, arginine 508, glutamine 509, and lysine 521 each contribute to the ATP site. Position 544 is an N6-acetyllysine (lysine 544). Valine 545 is an ATP binding site. Aspartate 569 serves as a coordination point for Mg(2+). Position 570 (asparagine 570) interacts with ATP. Catalysis depends on cysteine 625, which acts as the Glycyl thioester intermediate. At lysine 729 the chain carries N6-acetyllysine. Serine 737 is modified (phosphoserine).

It belongs to the ubiquitin-activating E1 family. In terms of assembly, forms a thioester with UBD in cells stimulated with tumor necrosis factor-alpha (TNFa) and interferon-gamma (IFNg). In terms of tissue distribution, widely expressed. Isoform 2 is predominantly expressed in testis with higher expression in adult testis than in fetal testis.

It carries out the reaction ATP + ubiquitin + [E1 ubiquitin-activating enzyme]-L-cysteine = AMP + diphosphate + S-ubiquitinyl-[E1 ubiquitin-activating enzyme]-L-cysteine.. It functions in the pathway protein modification; protein ubiquitination. Functionally, activates ubiquitin by first adenylating its C-terminal glycine residue with ATP, and thereafter linking this residue to the side chain of a cysteine residue in E1, yielding a ubiquitin-E1 thioester and free AMP. Specific for ubiquitin, does not activate ubiquitin-like peptides. Also activates UBD/FAT10 conjugation via adenylation of its C-terminal glycine. Differs from UBE1 in its specificity for substrate E2 charging. Does not charge cell cycle E2s, such as CDC34. Essential for embryonic development. Isoform 2 may play a key role in ubiquitin system and may influence spermatogenesis and male fertility. The chain is Ubiquitin-like modifier-activating enzyme 6 (UBA6) from Homo sapiens (Human).